Consider the following 211-residue polypeptide: RNA chaperone ProQ (211 aa).

Positions 113 to 147 (RRAVEKANNPKANKKRSVYHSGNKSENKKSAGKKF) are disordered.

It belongs to the ProQ family.

The protein resides in the cytoplasm. In terms of biological role, RNA chaperone with significant RNA binding, RNA strand exchange and RNA duplexing activities. This chain is RNA chaperone ProQ, found in Histophilus somni (strain 129Pt) (Haemophilus somnus).